The following is a 574-amino-acid chain: Streptolysin O (574 aa).

The N-terminal stretch at 1–36 (MKDMSNKKIFKKYSRVAGLLTAALIVGNLVTANADS) is a signal peptide. A compositionally biased stretch (low complexity) spans 37-52 (NKQNTANTETTTTNEQ). Disordered regions lie at residues 37–64 (NKQN…TTEK) and 84–111 (KEMP…HTEE). Basic and acidic residues predominate over residues 53-64 (PKPESSELTTEK). 4 beta stranded membrane-spanning segments follow: residues 263-276 (KSQI…NSKI), 283-292 (IDFKSISKGE), 361-370 (SNDVEAAFSA), and 378-390 (KTNG…LENS). Positions 532-542 (ECTGLAWEWWR) match the Conserved undecapeptide motif. The Cholesterol binding motif lies at 564-565 (TL).

Belongs to the cholesterol-dependent cytolysin family. In terms of assembly, homooligomeric pore complex of 35 to 50 subunits; when inserted in the host membrane.

It is found in the secreted. The protein localises to the host cell membrane. In terms of biological role, a cholesterol-dependent toxin that causes cytolysis by forming pores in cholesterol containing host membranes. After binding to target membranes, the protein undergoes a major conformation change, leading to its insertion in the host membrane and formation of an oligomeric pore complex. Cholesterol is required for binding to host membranes, membrane insertion and pore formation; cholesterol binding is mediated by a Thr-Leu pair in the C-terminus. Can be reversibly inactivated by oxidation. The sequence is that of Streptolysin O (slo) from Streptococcus canis.